A 403-amino-acid polypeptide reads, in one-letter code: Probable tRNA sulfurtransferase (403 aa).

In terms of domain architecture, THUMP spans 60-165 (QLAEERLKPI…KEGVFLSCRT (106 aa)). Residues 183–184 (ML), 208–209 (HF), R265, G287, and Q296 contribute to the ATP site.

This sequence belongs to the ThiI family.

It localises to the cytoplasm. The catalysed reaction is [ThiI sulfur-carrier protein]-S-sulfanyl-L-cysteine + a uridine in tRNA + 2 reduced [2Fe-2S]-[ferredoxin] + ATP + H(+) = [ThiI sulfur-carrier protein]-L-cysteine + a 4-thiouridine in tRNA + 2 oxidized [2Fe-2S]-[ferredoxin] + AMP + diphosphate. The enzyme catalyses [ThiS sulfur-carrier protein]-C-terminal Gly-Gly-AMP + S-sulfanyl-L-cysteinyl-[cysteine desulfurase] + AH2 = [ThiS sulfur-carrier protein]-C-terminal-Gly-aminoethanethioate + L-cysteinyl-[cysteine desulfurase] + A + AMP + 2 H(+). It participates in cofactor biosynthesis; thiamine diphosphate biosynthesis. In terms of biological role, catalyzes the ATP-dependent transfer of a sulfur to tRNA to produce 4-thiouridine in position 8 of tRNAs, which functions as a near-UV photosensor. Also catalyzes the transfer of sulfur to the sulfur carrier protein ThiS, forming ThiS-thiocarboxylate. This is a step in the synthesis of thiazole, in the thiamine biosynthesis pathway. The sulfur is donated as persulfide by IscS. This is Probable tRNA sulfurtransferase from Listeria innocua serovar 6a (strain ATCC BAA-680 / CLIP 11262).